The following is a 382-amino-acid chain: Queuine tRNA-ribosyltransferase (382 aa).

D93 acts as the Proton acceptor in catalysis. Substrate is bound by residues 93 to 97 (DSGGF), D147, Q191, and G218. An RNA binding region spans residues 249–255 (GVGKPED). D268 (nucleophile) is an active-site residue. The interval 273 to 277 (TRNAR) is RNA binding; important for wobble base 34 recognition. 4 residues coordinate Zn(2+): C306, C308, C311, and H337.

Belongs to the queuine tRNA-ribosyltransferase family. As to quaternary structure, homodimer. Within each dimer, one monomer is responsible for RNA recognition and catalysis, while the other monomer binds to the replacement base PreQ1. It depends on Zn(2+) as a cofactor.

The enzyme catalyses 7-aminomethyl-7-carbaguanine + guanosine(34) in tRNA = 7-aminomethyl-7-carbaguanosine(34) in tRNA + guanine. The protein operates within tRNA modification; tRNA-queuosine biosynthesis. Catalyzes the base-exchange of a guanine (G) residue with the queuine precursor 7-aminomethyl-7-deazaguanine (PreQ1) at position 34 (anticodon wobble position) in tRNAs with GU(N) anticodons (tRNA-Asp, -Asn, -His and -Tyr). Catalysis occurs through a double-displacement mechanism. The nucleophile active site attacks the C1' of nucleotide 34 to detach the guanine base from the RNA, forming a covalent enzyme-RNA intermediate. The proton acceptor active site deprotonates the incoming PreQ1, allowing a nucleophilic attack on the C1' of the ribose to form the product. After dissociation, two additional enzymatic reactions on the tRNA convert PreQ1 to queuine (Q), resulting in the hypermodified nucleoside queuosine (7-(((4,5-cis-dihydroxy-2-cyclopenten-1-yl)amino)methyl)-7-deazaguanosine). This Haemophilus influenzae (strain ATCC 51907 / DSM 11121 / KW20 / Rd) protein is Queuine tRNA-ribosyltransferase.